A 398-amino-acid polypeptide reads, in one-letter code: Phospholipase C (398 aa).

Positions 1 to 28 (MKRKICKALICAALATSLWAGASTKVYA) are cleaved as a signal peptide. Trp29, His39, Asp84, His96, His154, Asp158, His164, His176, and Glu180 together coordinate Zn(2+). One can recognise a Zn-dependent PLC domain in the interval 29-278 (WDGKIDGTGT…HDVSEGNDPS (250 aa)). Residues 275–283 (NDPSVGKNV) form a linker region. A PLAT domain is found at 284–398 (KELVAYISTS…ISGNSTYNIK (115 aa)). Positions 297, 299, 300, 301, 321, 322, 324, 325, 326, 364, and 365 each coordinate Ca(2+).

It belongs to the bacterial zinc-metallophospholipase C family. Ca(2+) is required as a cofactor. It depends on Zn(2+) as a cofactor.

It localises to the secreted. The enzyme catalyses a 1,2-diacyl-sn-glycero-3-phosphocholine + H2O = phosphocholine + a 1,2-diacyl-sn-glycerol + H(+). Functionally, bacterial hemolysins are exotoxins that attack blood cell membranes and cause cell rupture. Constitutes an essential virulence factor in gas gangrene. Binds to eukaryotic membranes where it hydrolyzes both phosphatidylcholine and sphingomyelin. The diacylglycerol produced can activate both the arachidonic acid pathway, leading to modulation of the inflammatory response cascade and thrombosis, and protein kinase C, leading to activation of eukaryotic phospholipases and further membrane damage. Acts on human and mouse erythrocytes, but not on rabbit or horse erythrocytes. This is Phospholipase C (plc) from Clostridium perfringens (strain ATCC 13124 / DSM 756 / JCM 1290 / NCIMB 6125 / NCTC 8237 / Type A).